The following is a 418-amino-acid chain: Serine hydroxymethyltransferase (418 aa).

(6S)-5,6,7,8-tetrahydrofolate contacts are provided by residues Leu-121 and 125 to 127 (GHL). Lys-230 bears the N6-(pyridoxal phosphate)lysine mark. 355–357 (SPF) contacts (6S)-5,6,7,8-tetrahydrofolate.

The protein belongs to the SHMT family. Homodimer. The cofactor is pyridoxal 5'-phosphate.

It localises to the cytoplasm. The enzyme catalyses (6R)-5,10-methylene-5,6,7,8-tetrahydrofolate + glycine + H2O = (6S)-5,6,7,8-tetrahydrofolate + L-serine. It participates in one-carbon metabolism; tetrahydrofolate interconversion. Its pathway is amino-acid biosynthesis; glycine biosynthesis; glycine from L-serine: step 1/1. Catalyzes the reversible interconversion of serine and glycine with tetrahydrofolate (THF) serving as the one-carbon carrier. This reaction serves as the major source of one-carbon groups required for the biosynthesis of purines, thymidylate, methionine, and other important biomolecules. Also exhibits THF-independent aldolase activity toward beta-hydroxyamino acids, producing glycine and aldehydes, via a retro-aldol mechanism. This chain is Serine hydroxymethyltransferase, found in Streptococcus pneumoniae (strain P1031).